Consider the following 1938-residue polypeptide: Myosin-1 (1938 aa).

Residues D33–P82 enclose the Myosin N-terminal SH3-like domain. A phosphothreonine mark is found at T64 and T69. The Myosin motor domain occupies D86–D781. K130 bears the N6,N6,N6-trimethyllysine mark. G179 to T186 contacts ATP. At Y389 the chain carries Phosphotyrosine. T419 bears the Phosphothreonine mark. The residue at position 424 (Y424) is a Phosphotyrosine. S625 bears the Phosphoserine mark. Residues L658–E680 form an actin-binding region. Residue H756 is modified to Pros-methylhistidine. An actin-binding region spans residues K760–G774. Residues L784–S813 form the IQ domain. Residues L842–E1938 adopt a coiled-coil conformation. S1091 and S1095 each carry phosphoserine. Disordered stretches follow at residues E1124–L1146 and R1152–E1171. Over residues A1127–L1146 the composition is skewed to basic and acidic residues. Residues S1161 and S1236 each carry the phosphoserine modification. Residue T1240 is modified to Phosphothreonine. Residue S1242 is modified to Phosphoserine. T1254 bears the Phosphothreonine mark. Position 1260 is a phosphoserine (S1260). The residue at position 1285 (T1285) is a Phosphothreonine. Phosphoserine occurs at positions 1291, 1302, and 1305. The residue at position 1463 (Y1463) is a Phosphotyrosine. T1466 bears the Phosphothreonine mark. S1473 bears the Phosphoserine mark. Position 1491 is a phosphotyrosine (Y1491). Position 1494 is a phosphoserine (S1494). Position 1500 is a phosphothreonine (T1500). Position 1513 is a phosphoserine (S1513). T1516 is modified (phosphothreonine). Phosphoserine is present on residues S1541, S1553, S1573, S1713, and S1725. Phosphothreonine is present on residues T1729 and T1735. S1738 carries the phosphoserine modification.

It belongs to the TRAFAC class myosin-kinesin ATPase superfamily. Myosin family. As to quaternary structure, muscle myosin is a hexameric protein that consists of 2 heavy chain subunits (MHC), 2 alkali light chain subunits (MLC) and 2 regulatory light chain subunits (MLC-2). Interacts with SLC26A5.

The protein resides in the cytoplasm. It localises to the myofibril. In terms of biological role, required for normal hearing. It plays a role in cochlear amplification of auditory stimuli, likely through the positive regulation of prestin (SLC26A5) activity and outer hair cell (OHC) electromotility. This is Myosin-1 (MYH1) from Equus caballus (Horse).